Here is a 285-residue protein sequence, read N- to C-terminus: Ribosomal RNA small subunit methyltransferase A (285 aa).

S-adenosyl-L-methionine is bound by residues asparagine 29, leucine 31, glycine 56, glutamate 77, aspartate 102, and asparagine 123.

Belongs to the class I-like SAM-binding methyltransferase superfamily. rRNA adenine N(6)-methyltransferase family. RsmA subfamily.

Its subcellular location is the cytoplasm. The enzyme catalyses adenosine(1518)/adenosine(1519) in 16S rRNA + 4 S-adenosyl-L-methionine = N(6)-dimethyladenosine(1518)/N(6)-dimethyladenosine(1519) in 16S rRNA + 4 S-adenosyl-L-homocysteine + 4 H(+). Functionally, specifically dimethylates two adjacent adenosines (A1518 and A1519) in the loop of a conserved hairpin near the 3'-end of 16S rRNA in the 30S particle. May play a critical role in biogenesis of 30S subunits. This chain is Ribosomal RNA small subunit methyltransferase A, found in Clostridium perfringens (strain ATCC 13124 / DSM 756 / JCM 1290 / NCIMB 6125 / NCTC 8237 / Type A).